The primary structure comprises 424 residues: Serine--tRNA ligase (424 aa).

Residue 230-232 (TAE) participates in L-serine binding. 261-263 (RSE) lines the ATP pocket. Glu-284 lines the L-serine pocket. Position 348–351 (348–351 (EISS)) interacts with ATP. Ser-384 lines the L-serine pocket.

This sequence belongs to the class-II aminoacyl-tRNA synthetase family. Type-1 seryl-tRNA synthetase subfamily. Homodimer. The tRNA molecule binds across the dimer.

The protein resides in the cytoplasm. The catalysed reaction is tRNA(Ser) + L-serine + ATP = L-seryl-tRNA(Ser) + AMP + diphosphate + H(+). It carries out the reaction tRNA(Sec) + L-serine + ATP = L-seryl-tRNA(Sec) + AMP + diphosphate + H(+). Its pathway is aminoacyl-tRNA biosynthesis; selenocysteinyl-tRNA(Sec) biosynthesis; L-seryl-tRNA(Sec) from L-serine and tRNA(Sec): step 1/1. Catalyzes the attachment of serine to tRNA(Ser). Is also able to aminoacylate tRNA(Sec) with serine, to form the misacylated tRNA L-seryl-tRNA(Sec), which will be further converted into selenocysteinyl-tRNA(Sec). This Streptococcus pneumoniae (strain JJA) protein is Serine--tRNA ligase.